A 614-amino-acid polypeptide reads, in one-letter code: Dihydroxy-acid dehydratase (614 aa).

Asp-81 serves as a coordination point for Mg(2+). Cys-122 is a binding site for [2Fe-2S] cluster. Positions 123 and 124 each coordinate Mg(2+). Lys-124 carries the N6-carboxylysine modification. Cys-193 provides a ligand contact to [2Fe-2S] cluster. Glu-489 is a Mg(2+) binding site. The active-site Proton acceptor is the Ser-515.

The protein belongs to the IlvD/Edd family. In terms of assembly, homodimer. [2Fe-2S] cluster is required as a cofactor. The cofactor is Mg(2+).

The enzyme catalyses (2R)-2,3-dihydroxy-3-methylbutanoate = 3-methyl-2-oxobutanoate + H2O. It carries out the reaction (2R,3R)-2,3-dihydroxy-3-methylpentanoate = (S)-3-methyl-2-oxopentanoate + H2O. It functions in the pathway amino-acid biosynthesis; L-isoleucine biosynthesis; L-isoleucine from 2-oxobutanoate: step 3/4. Its pathway is amino-acid biosynthesis; L-valine biosynthesis; L-valine from pyruvate: step 3/4. Functionally, functions in the biosynthesis of branched-chain amino acids. Catalyzes the dehydration of (2R,3R)-2,3-dihydroxy-3-methylpentanoate (2,3-dihydroxy-3-methylvalerate) into 2-oxo-3-methylpentanoate (2-oxo-3-methylvalerate) and of (2R)-2,3-dihydroxy-3-methylbutanoate (2,3-dihydroxyisovalerate) into 2-oxo-3-methylbutanoate (2-oxoisovalerate), the penultimate precursor to L-isoleucine and L-valine, respectively. The sequence is that of Dihydroxy-acid dehydratase from Cellvibrio japonicus (strain Ueda107) (Pseudomonas fluorescens subsp. cellulosa).